A 190-amino-acid polypeptide reads, in one-letter code: Hypoxanthine/guanine phosphoribosyltransferase (190 aa).

It belongs to the purine/pyrimidine phosphoribosyltransferase family. Archaeal HPRT subfamily. Homodimer.

The protein resides in the cytoplasm. The enzyme catalyses IMP + diphosphate = hypoxanthine + 5-phospho-alpha-D-ribose 1-diphosphate. It carries out the reaction GMP + diphosphate = guanine + 5-phospho-alpha-D-ribose 1-diphosphate. It participates in purine metabolism; IMP biosynthesis via salvage pathway; IMP from hypoxanthine: step 1/1. Catalyzes a salvage reaction resulting in the formation of IMP that is energically less costly than de novo synthesis. The polypeptide is Hypoxanthine/guanine phosphoribosyltransferase (Methanobacterium paludis (strain DSM 25820 / JCM 18151 / SWAN1)).